Here is an 898-residue protein sequence, read N- to C-terminus: Transportin-1 (898 aa).

HEAT repeat units lie at residues 19–46, 51–89, 98–131, 137–174, 181–211, 224–251, 263–290, 306–397, 405–433, 445–472, 486–519, 527–560, 568–606, 614–665, 676–707, 715–748, 756–791, 799–832, 841–872, and 875–895; these read GLQQILQLLKESQSPDTTIQRTVQQKLE, YPDFNNYLIFVLTKLKSEDEPTRSLSGLILKNNVKAHFQ, FIKSECLNNIGDSSPLIRATVGILITTIASKGEL, LLPKLCSLLDSEDYNTCEGAFGALQKICEDSAEILDSD, NIMIPKFLQFFKHSSPKIRSHAVACVNQFII, FIENLFALAGDEEAEVRKNVCRALVMLL, HNIVEYMLQRTQDQDENVALEACEFWLT, PKLI…LANV, HILPLLKELLFHHEWVVKESGILVLGAIA, PELIPHLIQCLSDKKALVRSITCWTLSR, LKPLMTELLKRILDSNKRVQEAACSAFATLEEEA, LAYILDTLVFAFSKYQHKNLLILYDAIGTLADSV, EYIQMLMPPLIQKWNMLKDEDKDLFPLLECLSSVATALQ, EPVY…GLGG, ILTLMYQCMQDKMPEVRQSSFALLGDLTKACF, ADFMPILGTNLNPEFISVCNNATWAIGEISIQMG, PMVLHQLVEIINRPNTPKTLLENTAITIGRLGYVCP, QQFIRPWCTSLRNIRDNEEKDSAFRGICTMISVN, IFFCDAVASWINPKDDLRDMFCKILHGFKNQV, and ENWRRFSDQFPLPLKERLAAF. Positions 41–109 constitute an Importin N-terminal domain; it reads VQQKLEQLNQ…KSECLNNIGD (69 aa). Residues 347–374 form a disordered region; sequence FHRSRTVAQQHEEDGIEEEDDDDDEIDD. Positions 360–374 are enriched in acidic residues; sequence DGIEEEDDDDDEIDD.

This sequence belongs to the importin beta family. Importin beta-2 subfamily. Identified in a complex that contains TNPO1, RAN and RANBP1. Binds HNRPA1, HNRPA2, HNRNPDL, RPS7, RPL5 and RAN. Interacts with H2A, H2B, H3 and H4 histones. Interacts with isoform 1 and isoform 5 of ADAR/ADAR1 (via DRBM 3 domain). Interacts with SNAI1 (via zinc fingers); the interaction mediates SNAI1 nuclear import. Interacts with SNAI2 (via zinc fingers). Interacts with RPL23A (via BIB domain) and SRP19; this interaction is involved in RPL23A and SRP19 import into the nucleus. Interacts (via HEAT repeats 8-12) with BAP1 (via non-classical PY-NLS); this interaction is direct, is involved in BAP1 nuclear import and disrupts BAP1 homodimerization.

It localises to the cytoplasm. The protein localises to the nucleus. Its function is as follows. Functions in nuclear protein import as nuclear transport receptor. Serves as receptor for nuclear localization signals (NLS) in cargo substrates. May mediate docking of the importin/substrate complex to the nuclear pore complex (NPC) through binding to nucleoporin and the complex is subsequently translocated through the pore by an energy requiring, Ran-dependent mechanism. At the nucleoplasmic side of the NPC, Ran binds to the importin, the importin/substrate complex dissociates and importin is re-exported from the nucleus to the cytoplasm where GTP hydrolysis releases Ran. The directionality of nuclear import is thought to be conferred by an asymmetric distribution of the GTP- and GDP-bound forms of Ran between the cytoplasm and nucleus. Involved in nuclear import of M9-containing proteins. In vitro, binds directly to the M9 region of the heterogeneous nuclear ribonucleoproteins (hnRNP), A1 and A2 and mediates their nuclear import. Involved in hnRNP A1/A2 nuclear export. Mediates the nuclear import of ribosomal proteins RPL23A, RPS7 and RPL5. In vitro, mediates nuclear import of SRP19. Mediates the import of histones H2A, H2B, H3 and H4. Mediates nuclear import of ADAR/ADAR1 in a RanGTP-dependent manner. Main mediator of PR-DUB complex component BAP1 nuclear import; acts redundantly with the karyopherins KPNA1 and KPNA2. The polypeptide is Transportin-1 (Tnpo1) (Mus musculus (Mouse)).